Reading from the N-terminus, the 311-residue chain is Methionyl-tRNA formyltransferase (311 aa).

A (6S)-5,6,7,8-tetrahydrofolate-binding site is contributed by 109 to 112 (SLLP).

It belongs to the Fmt family.

The catalysed reaction is L-methionyl-tRNA(fMet) + (6R)-10-formyltetrahydrofolate = N-formyl-L-methionyl-tRNA(fMet) + (6S)-5,6,7,8-tetrahydrofolate + H(+). In terms of biological role, attaches a formyl group to the free amino group of methionyl-tRNA(fMet). The formyl group appears to play a dual role in the initiator identity of N-formylmethionyl-tRNA by promoting its recognition by IF2 and preventing the misappropriation of this tRNA by the elongation apparatus. The polypeptide is Methionyl-tRNA formyltransferase (Kosmotoga olearia (strain ATCC BAA-1733 / DSM 21960 / TBF 19.5.1)).